The primary structure comprises 102 residues: Salivary protein Salp9 (102 aa).

A signal peptide spans Met-1 to Ala-21. N-linked (GlcNAc...) asparagine glycosylation is found at Asn-26 and Asn-87. The disordered stretch occupies residues Ser-83–Ala-102.

It belongs to the salp14 family. As to expression, salivary gland (at protein level). Saliva (at protein level). Midgut.

Its subcellular location is the secreted. Its function is as follows. Salivary protein that facilitates blood feeding of adult ticks on vertebrate species. Inhibits the lectin pathway of complement system activation in the host. The polypeptide is Salivary protein Salp9 (Ixodes scapularis (Black-legged tick)).